A 626-amino-acid chain; its full sequence is 5'-AMP-activated protein kinase catalytic subunit alpha-2 (626 aa).

The segment covering 1-24 has biased composition (basic and acidic residues); it reads MFSHQDRDRDRKEDGGGDGTEMKS. Positions 1–77 are disordered; the sequence is MFSHQDRDRD…GETSTKQQQE (77 aa). A compositionally biased stretch (basic residues) spans 38 to 49; the sequence is NLSRKLSAKSRK. The segment covering 58–77 has biased composition (polar residues); it reads DNSSKMSSPGGETSTKQQQE. In terms of domain architecture, Protein kinase spans 87–339; it reads YILKETLGVG…IKDVIAHEWF (253 aa). ATP contacts are provided by residues 93–101 and lysine 116; that span reads LGVGTFGKV. Catalysis depends on aspartate 210, which acts as the Proton acceptor. Threonine 243 is modified (phosphothreonine; by par-4). The interval 541 to 568 is disordered; it reads SGSASASSSRHASMSMPQKPAGIRGTRT. Over residues 542–555 the composition is skewed to low complexity; it reads GSASASSSRHASMS.

This sequence belongs to the protein kinase superfamily. CAMK Ser/Thr protein kinase family. SNF1 subfamily. Tetramer, composed of 2 regulatory (R) and 2 catalytic (C) subunits. In the presence of cAMP it dissociates into 2 active monomeric C subunits and an R dimer that binds four cAMP molecules. Phosphorylated on Thr-243 in response to oxidative stress and during dauer development. Phosphorylation at Thr-243 is increased in response to sodium azide or the AMP analog AICAR (5-amino-1-(5-phospho-beta-D-ribosyl)imidazole-4-carboxamide). In terms of tissue distribution, expressed in the pharynx, the ventral cord, neurons including the hermaphrodite-specific neuron, body wall muscles, the vulva, the excretory canal, and weakly in the intestine.

The catalysed reaction is L-seryl-[protein] + ATP = O-phospho-L-seryl-[protein] + ADP + H(+). It carries out the reaction L-threonyl-[protein] + ATP = O-phospho-L-threonyl-[protein] + ADP + H(+). With respect to regulation, activated by phosphorylation. Functionally, acts as a sensor that couples lifespan to information about energy levels and insulin-like signals. Role in motility and response to oxidative stress. Involved in the establishment of germline stem cell (GSC) quiescence during dauer development. Plays a role in axon regrowth after axotomy in PLM neurons. Plays a role in the maintenance of glycogen stores which are necessary for resistance to hyperosmotic stress. Plays a role in the regulation of flp-7 secretion from ASI neurons. Keeps the CREB-regulated transcription coactivator 1 homolog crtc-1 inactive which in turn inhibits flp-7 secretion. Following serotonin signaling, derepresses crtc-1 which stimulates flp-7 secretion and subsequent body fat loss. The polypeptide is 5'-AMP-activated protein kinase catalytic subunit alpha-2 (Caenorhabditis elegans).